Consider the following 1034-residue polypeptide: MDSHPSLMGRSITNSNRSSLDLGRPSSSSSSSPSPLTKSISDASSQSLSSILNNPHGGKSGVYGSDASWVGWWSSSTFVAPAEFAPVASTKLPGSELTRSDFHGYVSSISESHGRFEDIRKHTREESCGFDQESHVSGLAACLREVPSLYFKEDFALEDGATFRSACPFSSLNENLALQEKLSQYLDVVELHLVKEISVRSDSFFEAQGQLQDLNVKIVEGCSRIRELKETIRLLDRNLVDSARQIQELSSTRINMLELQRKLRLILYVNQALSALKLLVASADCAGALDITDDLQNLLAGDELTGLYCFRHLRDHVTSSIDSINSILTSEFMRISIHDTGEIDVLILSAANIRGSISSNGNTGEEVKLEEEDTSTLCDRLLPLVIGLLRTAKFPSILRMYRDTLTSEMKNAIKKAVADLLPILVARSLESDFSHGERSVDDGGGLSLASKLRTLSSEAFVNLLTAIFKIVQAHLVRASEVKKAIEWILCNIDGHYAADSVAAAIAVGAVAAETAQEIGFQGGSLVSSPLGKATSKAPPLQGKSSDASSLMNMSRNFRADVLRENTEAVFAACEVTHGRWAKLLGVRALLHPKLKLQEFMSIYDLTQEFITSTEKIGGRLGSSIRGTLQSQAKAFVDSQHESRMTKLKAVLDQETWDEIDVPEEFQSIISSLFASQRLISGKVDDADLNSYHSNRLPLNGSLTSGSGDQNSELRNEKSESSEGSVVSDAQVKPTVSPESLERSKAGVSSATNNQSNQKAHGKSNLFYQGVGYHMVNCGLILLKMLSEYIDMNNSLPALSSEIVLRVVEVLRFFNTRTCQLVLGAGAMQVSGLKSIKAKHLALASQVIDFTYTIIPETRRILFSKVPETRKPLLSVEIDKVAQDFRIHRDEIYTKLVQIMRERLLAHLHGLPKVVEGWNRPPDTNKQTKEFAWPLTREVGYLHRVLSETLHEADVQAIFRQVISIIHTQTSQTLTNLEISSTEAKKRLKLHVELILKCIRSLPSDNANQSDIPNWGQLDEFFAEHFREEEAGEAE.

The disordered stretch occupies residues 1-42; that stretch reads MDSHPSLMGRSITNSNRSSLDLGRPSSSSSSSPSPLTKSISD. The N-terminal 87 residues, 1–87, are a transit peptide targeting the chloroplast; it reads MDSHPSLMGR…FVAPAEFAPV (87 aa). Residues 18 to 42 show a composition bias toward low complexity; it reads SSLDLGRPSSSSSSSPSPLTKSISD. Residues 224 to 264 are a coiled coil; the sequence is RIRELKETIRLLDRNLVDSARQIQELSSTRINMLELQRKLR. 2 disordered regions span residues 529–548 and 694–758; these read PLGK…SDAS and NRLP…SNQK. Residues 700-710 show a composition bias toward polar residues; it reads GSLTSGSGDQN. A compositionally biased stretch (basic and acidic residues) spans 711-720; the sequence is SELRNEKSES. Residues 746–758 show a composition bias toward polar residues; the sequence is GVSSATNNQSNQK.

The protein belongs to the VPS54 family. In terms of assembly, component of the Golgi-associated retrograde protein (GARP) complex, composed by VPS52, VPS53 and VPS54. Interacts directly with VPS53. In terms of tissue distribution, present in pollen. Mostly expressed in roots and flower buds, and, at lower levels, in vegetative tissues and mature flowers.

It is found in the golgi apparatus membrane. The protein localises to the golgi apparatus. The protein resides in the trans-Golgi network membrane. It localises to the plastid. Its subcellular location is the chloroplast. Acts as a component of the GARP complex that is involved in retrograde transport from early and late endosomes to the trans-Golgi network (TGN). The GARP complex facilitates tethering as well as SNARE complex assembly at the Golgi. Probably involved in pollen tube elongation and other polar growth. In Arabidopsis thaliana (Mouse-ear cress), this protein is Vacuolar protein sorting-associated protein 54, chloroplastic (VPS54).